We begin with the raw amino-acid sequence, 204 residues long: Large ribosomal subunit protein eL15 (204 aa).

Belongs to the eukaryotic ribosomal protein eL15 family. In terms of assembly, component of the large ribosomal subunit.

It localises to the cytoplasm. Functionally, component of the large ribosomal subunit. The ribosome is a large ribonucleoprotein complex responsible for the synthesis of proteins in the cell. This Hypophthalmichthys molitrix (Silver carp) protein is Large ribosomal subunit protein eL15 (rpl15).